The primary structure comprises 544 residues: Chaperonin GroEL (544 aa).

ATP is bound by residues 30-33 (TLGP), K51, 87-91 (DGTTT), G415, 479-481 (NAA), and D495.

This sequence belongs to the chaperonin (HSP60) family. Forms a cylinder of 14 subunits composed of two heptameric rings stacked back-to-back. Interacts with the co-chaperonin GroES.

The protein localises to the cytoplasm. It catalyses the reaction ATP + H2O + a folded polypeptide = ADP + phosphate + an unfolded polypeptide.. Functionally, together with its co-chaperonin GroES, plays an essential role in assisting protein folding. The GroEL-GroES system forms a nano-cage that allows encapsulation of the non-native substrate proteins and provides a physical environment optimized to promote and accelerate protein folding. The polypeptide is Chaperonin GroEL (Francisella tularensis subsp. tularensis (strain WY96-3418)).